A 94-amino-acid chain; its full sequence is DNA gyrase subunit A (94 aa).

The Topo IIA-type catalytic domain occupies 35 to 94 (LPDVRDGLKPVHRRILYGLNEQGMTPDKPYKKSARIVGDVMGKYHPHGDSSIYEAMVRMA).

The protein belongs to the type II topoisomerase GyrA/ParC subunit family. As to quaternary structure, heterotetramer, composed of two GyrA and two GyrB chains. In the heterotetramer, GyrA contains the active site tyrosine that forms a transient covalent intermediate with DNA, while GyrB binds cofactors and catalyzes ATP hydrolysis.

The protein localises to the cytoplasm. It carries out the reaction ATP-dependent breakage, passage and rejoining of double-stranded DNA.. In terms of biological role, a type II topoisomerase that negatively supercoils closed circular double-stranded (ds) DNA in an ATP-dependent manner to modulate DNA topology and maintain chromosomes in an underwound state. Negative supercoiling favors strand separation, and DNA replication, transcription, recombination and repair, all of which involve strand separation. Also able to catalyze the interconversion of other topological isomers of dsDNA rings, including catenanes and knotted rings. Type II topoisomerases break and join 2 DNA strands simultaneously in an ATP-dependent manner. In Staphylococcus epidermidis, this protein is DNA gyrase subunit A.